A 350-amino-acid polypeptide reads, in one-letter code: MVAPAPLVLSLGDPAGIGPDITLTAWAQRRELGLPAFLVAGDPEALKARVRQLGLTVPLAETGPEDAAGHFAEALPVMPAGPASTALPGAPDASSAPCVVASLEAALGLVQAGRAAALVTNPLAKSVMYAGGFPFPGHTEFLAARAARPGRPAPHPVMMIWSEQLAVVPATIHLPYADVPGHLTIDLLVETGRIVAGDMARRFGLAHPRLVFCGLNPHAGEEGTLGTEDEAIVRPAVEALKREGIDARGPLPADTLFHPQARAGYDVAVGMYHDQVLIPAKTLAFHDGVNVTLGLPFIRTSPDHGTAFDIAGTGRANPSSLVAALRLARRLADAEARLAAREGHRAASVA.

Substrate is bound by residues histidine 138 and threonine 139. The a divalent metal cation site is built by histidine 173, histidine 218, and histidine 273. Substrate contacts are provided by lysine 281, asparagine 290, and arginine 299.

This sequence belongs to the PdxA family. In terms of assembly, homodimer. Zn(2+) serves as cofactor. Requires Mg(2+) as cofactor. The cofactor is Co(2+).

It is found in the cytoplasm. The enzyme catalyses 4-(phosphooxy)-L-threonine + NAD(+) = 3-amino-2-oxopropyl phosphate + CO2 + NADH. It functions in the pathway cofactor biosynthesis; pyridoxine 5'-phosphate biosynthesis; pyridoxine 5'-phosphate from D-erythrose 4-phosphate: step 4/5. Catalyzes the NAD(P)-dependent oxidation of 4-(phosphooxy)-L-threonine (HTP) into 2-amino-3-oxo-4-(phosphooxy)butyric acid which spontaneously decarboxylates to form 3-amino-2-oxopropyl phosphate (AHAP). In Xanthobacter autotrophicus (strain ATCC BAA-1158 / Py2), this protein is 4-hydroxythreonine-4-phosphate dehydrogenase.